The sequence spans 388 residues: Chalcone synthase (388 aa).

Residue C164 is part of the active site.

The protein belongs to the thiolase-like superfamily. Chalcone/stilbene synthases family.

The enzyme catalyses (E)-4-coumaroyl-CoA + 3 malonyl-CoA + 3 H(+) = 2',4,4',6'-tetrahydroxychalcone + 3 CO2 + 4 CoA. Its pathway is secondary metabolite biosynthesis; flavonoid biosynthesis. Functionally, the primary product of this enzyme is 4,2',4',6'-tetrahydroxychalcone (also termed naringenin-chalcone or chalcone) which can under specific conditions spontaneously isomerize into naringenin. This is Chalcone synthase (CHS) from Vigna unguiculata (Cowpea).